The following is a 283-amino-acid chain: Phosphatidylserine decarboxylase proenzyme (283 aa).

Catalysis depends on charge relay system; for autoendoproteolytic cleavage activity residues Asp-90, His-143, and Ser-248. The active-site Schiff-base intermediate with substrate; via pyruvic acid; for decarboxylase activity is Ser-248. At Ser-248 the chain carries Pyruvic acid (Ser); by autocatalysis.

The protein belongs to the phosphatidylserine decarboxylase family. PSD-B subfamily. Prokaryotic type I sub-subfamily. As to quaternary structure, heterodimer of a large membrane-associated beta subunit and a small pyruvoyl-containing alpha subunit. Pyruvate is required as a cofactor. Is synthesized initially as an inactive proenzyme. Formation of the active enzyme involves a self-maturation process in which the active site pyruvoyl group is generated from an internal serine residue via an autocatalytic post-translational modification. Two non-identical subunits are generated from the proenzyme in this reaction, and the pyruvate is formed at the N-terminus of the alpha chain, which is derived from the carboxyl end of the proenzyme. The autoendoproteolytic cleavage occurs by a canonical serine protease mechanism, in which the side chain hydroxyl group of the serine supplies its oxygen atom to form the C-terminus of the beta chain, while the remainder of the serine residue undergoes an oxidative deamination to produce ammonia and the pyruvoyl prosthetic group on the alpha chain. During this reaction, the Ser that is part of the protease active site of the proenzyme becomes the pyruvoyl prosthetic group, which constitutes an essential element of the active site of the mature decarboxylase.

The protein localises to the cell membrane. The enzyme catalyses a 1,2-diacyl-sn-glycero-3-phospho-L-serine + H(+) = a 1,2-diacyl-sn-glycero-3-phosphoethanolamine + CO2. It participates in phospholipid metabolism; phosphatidylethanolamine biosynthesis; phosphatidylethanolamine from CDP-diacylglycerol: step 2/2. Its function is as follows. Catalyzes the formation of phosphatidylethanolamine (PtdEtn) from phosphatidylserine (PtdSer). The sequence is that of Phosphatidylserine decarboxylase proenzyme from Francisella tularensis subsp. novicida (strain U112).